The sequence spans 395 residues: Imidazolonepropionase (395 aa).

Residues histidine 63 and histidine 65 each coordinate Fe(3+). Histidine 63 and histidine 65 together coordinate Zn(2+). Arginine 72, tyrosine 135, and histidine 168 together coordinate 4-imidazolone-5-propanoate. Tyrosine 135 contacts N-formimidoyl-L-glutamate. Histidine 233 contributes to the Fe(3+) binding site. Histidine 233 contributes to the Zn(2+) binding site. Glutamine 236 contacts 4-imidazolone-5-propanoate. Aspartate 308 contributes to the Fe(3+) binding site. A Zn(2+)-binding site is contributed by aspartate 308. Asparagine 310 and glycine 312 together coordinate N-formimidoyl-L-glutamate. A 4-imidazolone-5-propanoate-binding site is contributed by threonine 313.

The protein belongs to the metallo-dependent hydrolases superfamily. HutI family. Requires Zn(2+) as cofactor. Fe(3+) is required as a cofactor.

It is found in the cytoplasm. The catalysed reaction is 4-imidazolone-5-propanoate + H2O = N-formimidoyl-L-glutamate. Its pathway is amino-acid degradation; L-histidine degradation into L-glutamate; N-formimidoyl-L-glutamate from L-histidine: step 3/3. Its function is as follows. Catalyzes the hydrolytic cleavage of the carbon-nitrogen bond in imidazolone-5-propanoate to yield N-formimidoyl-L-glutamate. It is the third step in the universal histidine degradation pathway. The polypeptide is Imidazolonepropionase (Cereibacter sphaeroides (strain KD131 / KCTC 12085) (Rhodobacter sphaeroides)).